Here is a 691-residue protein sequence, read N- to C-terminus: Protein phosphatase 1 regulatory subunit 37 (691 aa).

Residues 1–43 (MEIAPQEAPPVPGADGDIEEAPAEAGSPSPASPPADGRLKAAA) are disordered. 2 positions are modified to phosphoserine: serine 50 and serine 56. LRR repeat units lie at residues 220–240 (SLAVLHLENASLSGRPLMLLA), 248–269 (NLRELYLADNKLNGLQDSAQLG), 277–297 (SLQILDLRNNHVLDSGLAYIC), 306–326 (GLVTLVLWNNQLTHTGMAFLG), and 334–354 (SLETLNLGHNPIGNEGVRHLK). The tract at residues 460 to 662 (EREEKEQPPQ…PEVKGGSCGL (203 aa)) is disordered. Positions 468-481 (PQLSASMPETTATE) are enriched in polar residues. The segment covering 505–523 (SDSDSDSDGEEEEEEEGER) has biased composition (acidic residues). Phosphoserine is present on serine 561. 2 stretches are compositionally biased toward pro residues: residues 584–605 (PASPTPPSPPPPPSPPASPSLP) and 620–634 (PQPPPEPPRSGPPLP).

The protein belongs to the PPP1R37 family. As to quaternary structure, interacts with PPP1CA.

Functionally, inhibits phosphatase activity of protein phosphatase 1 (PP1) complexes. This chain is Protein phosphatase 1 regulatory subunit 37 (PPP1R37), found in Homo sapiens (Human).